A 462-amino-acid chain; its full sequence is Juvenile hormone epoxide hydrolase (462 aa).

The chain crosses the membrane as a helical span at residues isoleucine 4–leucine 24. Aspartate 227 serves as the catalytic Nucleophile. Residue tyrosine 372 is the Proton donor of the active site. Histidine 428 (proton acceptor) is an active-site residue.

It belongs to the peptidase S33 family.

It is found in the microsome membrane. Its subcellular location is the endoplasmic reticulum membrane. It carries out the reaction cis-stilbene oxide + H2O = (1R,2R)-hydrobenzoin. The catalysed reaction is 1-(4-methoxyphenyl)-N-methyl-N-[(3-methyloxetan-3-yl)methyl]methanamine + H2O = 2-{[(4-methoxybenzyl)(methyl)amino]methyl}-2-methylpropane-1,3-diol. Functionally, catalyzes juvenile hormone hydrolysis. The protein is Juvenile hormone epoxide hydrolase of Manduca sexta (Tobacco hawkmoth).